The chain runs to 152 residues: Transcriptional regulator MraZ (152 aa).

SpoVT-AbrB domains lie at 5-52 (ATLV…PLPE) and 81-124 (ASEC…DETT).

It belongs to the MraZ family. Forms oligomers.

The protein resides in the cytoplasm. It localises to the nucleoid. Negatively regulates its own expression and that of the subsequent genes in the proximal part of the division and cell wall (dcw) gene cluster. Acts by binding directly to DNA. May also regulate the expression of genes outside the dcw cluster. This chain is Transcriptional regulator MraZ, found in Shigella dysenteriae serotype 1 (strain Sd197).